Reading from the N-terminus, the 105-residue chain is Large ribosomal subunit protein uL24 (105 aa).

Belongs to the universal ribosomal protein uL24 family. Part of the 50S ribosomal subunit.

In terms of biological role, one of two assembly initiator proteins, it binds directly to the 5'-end of the 23S rRNA, where it nucleates assembly of the 50S subunit. One of the proteins that surrounds the polypeptide exit tunnel on the outside of the subunit. The polypeptide is Large ribosomal subunit protein uL24 (Clostridium kluyveri (strain ATCC 8527 / DSM 555 / NBRC 12016 / NCIMB 10680 / K1)).